The sequence spans 153 residues: Endoribonuclease YbeY (153 aa).

Zn(2+) is bound by residues H114, H118, and H124.

The protein belongs to the endoribonuclease YbeY family. The cofactor is Zn(2+).

The protein resides in the cytoplasm. In terms of biological role, single strand-specific metallo-endoribonuclease involved in late-stage 70S ribosome quality control and in maturation of the 3' terminus of the 16S rRNA. This chain is Endoribonuclease YbeY, found in Shewanella putrefaciens (strain CN-32 / ATCC BAA-453).